We begin with the raw amino-acid sequence, 115 residues long: Probable prefoldin subunit 1 (115 aa).

Belongs to the prefoldin subunit beta family. As to quaternary structure, heterohexamer of two PFD-alpha type and four PFD-beta type subunits.

In terms of biological role, binds specifically to cytosolic chaperonin (c-CPN) and transfers target proteins to it. Binds to nascent polypeptide chain and promotes folding in an environment in which there are many competing pathways for nonnative proteins. The protein is Probable prefoldin subunit 1 (pfdn1) of Dictyostelium discoideum (Social amoeba).